Here is a 133-residue protein sequence, read N- to C-terminus: Phosphoribosyl-AMP cyclohydrolase (133 aa).

Asp77 contributes to the Mg(2+) binding site. Residue Cys78 participates in Zn(2+) binding. Residues Asp79 and Asp81 each contribute to the Mg(2+) site. Zn(2+)-binding residues include Cys95 and Cys102.

The protein belongs to the PRA-CH family. As to quaternary structure, homodimer. Mg(2+) serves as cofactor. It depends on Zn(2+) as a cofactor.

It is found in the cytoplasm. It carries out the reaction 1-(5-phospho-beta-D-ribosyl)-5'-AMP + H2O = 1-(5-phospho-beta-D-ribosyl)-5-[(5-phospho-beta-D-ribosylamino)methylideneamino]imidazole-4-carboxamide. Its pathway is amino-acid biosynthesis; L-histidine biosynthesis; L-histidine from 5-phospho-alpha-D-ribose 1-diphosphate: step 3/9. Functionally, catalyzes the hydrolysis of the adenine ring of phosphoribosyl-AMP. This Azotobacter chroococcum mcd 1 protein is Phosphoribosyl-AMP cyclohydrolase.